We begin with the raw amino-acid sequence, 249 residues long: DNA repair protein RecO (249 aa).

The protein belongs to the RecO family.

In terms of biological role, involved in DNA repair and RecF pathway recombination. The protein is DNA repair protein RecO of Sinorhizobium medicae (strain WSM419) (Ensifer medicae).